Reading from the N-terminus, the 287-residue chain is Nucleotide-binding protein TGRD_433 (287 aa).

An ATP-binding site is contributed by 9–16 (GMSGAGKS). Position 60–63 (60–63 (DSRA)) interacts with GTP.

Belongs to the RapZ-like family.

Displays ATPase and GTPase activities. This Endomicrobium trichonymphae protein is Nucleotide-binding protein TGRD_433.